The following is a 207-amino-acid chain: Small ribosomal subunit protein uS4 (207 aa).

Residues 31–55 (KCKLDSKPGQHGRTSGARTSDYGTQ) are disordered. Residues 42 to 53 (GRTSGARTSDYG) are compositionally biased toward polar residues. The S4 RNA-binding domain occupies 97–160 (SRLDNVVYRM…KKQARIVEAL (64 aa)).

It belongs to the universal ribosomal protein uS4 family. Part of the 30S ribosomal subunit. Contacts protein S5. The interaction surface between S4 and S5 is involved in control of translational fidelity.

In terms of biological role, one of the primary rRNA binding proteins, it binds directly to 16S rRNA where it nucleates assembly of the body of the 30S subunit. With S5 and S12 plays an important role in translational accuracy. This Burkholderia thailandensis (strain ATCC 700388 / DSM 13276 / CCUG 48851 / CIP 106301 / E264) protein is Small ribosomal subunit protein uS4.